The following is a 338-amino-acid chain: RNA 3'-terminal phosphate cyclase (338 aa).

ATP is bound by residues glutamine 103 and 283–287 (YLADQ). Histidine 308 serves as the catalytic Tele-AMP-histidine intermediate.

It belongs to the RNA 3'-terminal cyclase family. Type 1 subfamily.

The protein localises to the cytoplasm. It catalyses the reaction a 3'-end 3'-phospho-ribonucleotide-RNA + ATP = a 3'-end 2',3'-cyclophospho-ribonucleotide-RNA + AMP + diphosphate. In terms of biological role, catalyzes the conversion of 3'-phosphate to a 2',3'-cyclic phosphodiester at the end of RNA. The mechanism of action of the enzyme occurs in 3 steps: (A) adenylation of the enzyme by ATP; (B) transfer of adenylate to an RNA-N3'P to produce RNA-N3'PP5'A; (C) and attack of the adjacent 2'-hydroxyl on the 3'-phosphorus in the diester linkage to produce the cyclic end product. The biological role of this enzyme is unknown but it is likely to function in some aspects of cellular RNA processing. This chain is RNA 3'-terminal phosphate cyclase, found in Escherichia coli O9:H4 (strain HS).